Consider the following 564-residue polypeptide: Zyxin (564 aa).

Alanine 2 is subject to N-acetylalanine. The interval 30–141 (VAPKPKVNPF…TQLPPQPREK (112 aa)) is disordered. Pro residues-rich tracts occupy residues 63-78 (IPPPPPEDFPLPPPPL) and 93-109 (FPPPPPPMIEEPFPPAP). A phosphoserine mark is found at serine 117, serine 144, serine 170, and serine 171. The interval 162 to 344 (NDPFKARVSS…RSPGGPGPLT (183 aa)) is disordered. Composition is skewed to pro residues over residues 174–189 (VPPPVATPFVPKPSTK) and 197–214 (PLPPWKTPSSSQPPPQPQ). The residue at position 180 (threonine 180) is a Phosphothreonine. Polar residues predominate over residues 234-243 (QPVSSANTQP). The residue at position 244 (arginine 244) is an Asymmetric dimethylarginine. A compositionally biased stretch (low complexity) spans 255-275 (PKFAPVAPKFTPVVSKFSPGA). An N6-acetyllysine mark is found at lysine 256 and lysine 263. Threonine 265 carries the phosphothreonine modification. Lysine 270 carries the N6-acetyllysine modification. A phosphoserine mark is found at serine 272 and serine 300. Over residues 294–310 (SSVSTGSPQPPSFTYAQ) the composition is skewed to polar residues. Over residues 311-322 (QKEKPLVQEKQH) the composition is skewed to basic and acidic residues. Phosphoserine is present on serine 336. 3 LIM zinc-binding domains span residues 376 to 435 (CGKC…TLEK), 436 to 495 (CNTC…YAPR), and 496 to 562 (CSVC…SARA).

Belongs to the zyxin/ajuba family. As to quaternary structure, interacts, via the Pro-rich regions, with the EVH1 domains of ENAH, EVL and VASP. Interacts with the first LIM domain of TES. Interacts with SYNPO2.

The protein localises to the cytoplasm. The protein resides in the cytoskeleton. Its subcellular location is the cell junction. It localises to the focal adhesion. It is found in the nucleus. In terms of biological role, adhesion plaque protein. Binds alpha-actinin and the CRP protein. Important for targeting TES and ENA/VASP family members to focal adhesions and for the formation of actin-rich structures. May be a component of a signal transduction pathway that mediates adhesion-stimulated changes in gene expression. This chain is Zyxin (Zyx), found in Mus musculus (Mouse).